We begin with the raw amino-acid sequence, 157 residues long: GDP-mannose mannosyl hydrolase (157 aa).

Residues 2 to 3 (FL), F8, and R36 each bind substrate. Positions 3-153 (LRQEDFAAVV…SRAYFSPDAP (151 aa)) constitute a Nudix hydrolase domain. Mg(2+)-binding residues include G49, E69, and Q122. The Nudix box motif lies at 50-71 (GRVCKDETLEAAFARLTQAELG).

Belongs to the Nudix hydrolase family. In terms of assembly, homodimer. Mg(2+) serves as cofactor.

The enzyme catalyses GDP-alpha-D-mannose + H2O = D-mannose + GDP + H(+). Functionally, hydrolyzes GDP-mannose. This chain is GDP-mannose mannosyl hydrolase, found in Salmonella typhi.